A 68-amino-acid chain; its full sequence is Gallinacin-10 (68 aa).

Residues 1 to 19 (MKILCLLFAVLLFLFQAAP) form the signal peptide. A propeptide spanning residues 20–25 (GSADPL) is cleaved from the precursor. 3 disulfide bridges follow: Cys32-Cys61, Cys39-Cys54, and Cys44-Cys62.

It belongs to the beta-defensin family. As to expression, strong expression in the testis, liver, gall bladder and kidney. Also expressed in the ovary and male and female reproductive tracts. Expressed in the ovarian stroma and the theca and granulosa layers of the ovarian follicle.

The protein resides in the secreted. Its subcellular location is the cytoplasmic granule. In terms of biological role, has bactericidal activity. This Gallus gallus (Chicken) protein is Gallinacin-10 (GAL10).